Reading from the N-terminus, the 336-residue chain is Probable aquaglyceroporin-2 (336 aa).

Positions Met-1 to Pro-46 are disordered. Residues Met-1 to Glu-64 are Cytoplasmic-facing. The span at Ser-9 to Ser-19 shows a compositional bias: low complexity. Residues Phe-65–Ser-85 traverse the membrane as a helical segment. Over Arg-86 to Ser-94 the chain is Extracellular. A helical transmembrane segment spans residues Ile-95–Gly-115. Topologically, residues His-116–Lys-135 are cytoplasmic. Residues Asn-118–Ala-120 carry the NPA 1 motif. A helical membrane pass occupies residues Phe-136–Gly-156. Residues Asn-157–Thr-195 lie on the Extracellular side of the membrane. The N-linked (GlcNAc...) asparagine glycan is linked to Asn-178. Residues Gly-196–Ala-216 traverse the membrane as a helical segment. The Cytoplasmic segment spans residues Asp-217–Ala-223. Residues Gly-224–Trp-244 traverse the membrane as a helical segment. Topologically, residues Glu-245 to Trp-280 are extracellular. Positions Asn-251–Ala-253 match the NPA 2 motif. Residues Ile-281–Ile-301 traverse the membrane as a helical segment. Over Tyr-302–Val-336 the chain is Cytoplasmic.

This sequence belongs to the MIP/aquaporin (TC 1.A.8) family.

It is found in the membrane. The enzyme catalyses H2O(in) = H2O(out). It catalyses the reaction glycerol(in) = glycerol(out). Probable water/glycerol channel that may have redundant functions with FgAQP4. This Gibberella zeae (strain ATCC MYA-4620 / CBS 123657 / FGSC 9075 / NRRL 31084 / PH-1) (Wheat head blight fungus) protein is Probable aquaglyceroporin-2.